The primary structure comprises 396 residues: Putative pyridoxal phosphate-dependent acyltransferase (396 aa).

Position 111–112 (111–112 (GF)) interacts with pyridoxal 5'-phosphate. Residue His136 coordinates substrate. Residues Ser186, 211–214 (DDAH), and 241–244 (TLSK) contribute to the pyridoxal 5'-phosphate site. N6-(pyridoxal phosphate)lysine is present on Lys244. Thr358 is a substrate binding site.

The protein belongs to the class-II pyridoxal-phosphate-dependent aminotransferase family. In terms of assembly, homodimer. The cofactor is pyridoxal 5'-phosphate.

The protein is Putative pyridoxal phosphate-dependent acyltransferase of Bacillus cereus (strain ATCC 14579 / DSM 31 / CCUG 7414 / JCM 2152 / NBRC 15305 / NCIMB 9373 / NCTC 2599 / NRRL B-3711).